The chain runs to 138 residues: Sporulation-specific protein 13 (138 aa).

A compositionally biased stretch (polar residues) spans 1-11 (MMSNSQISKLF). The disordered stretch occupies residues 1–31 (MMSNSQISKLFSSISNKENSNENALKESTNK). Low complexity predominate over residues 12 to 23 (SSISNKENSNEN). Residues 16–104 (NKENSNENAL…KRELDYLRAK (89 aa)) are a coiled coil.

As to quaternary structure, interacts with spo2.

It is found in the cytoplasm. The protein localises to the cytoskeleton. Its subcellular location is the microtubule organizing center. It localises to the spindle pole body. In terms of biological role, involved in sporulation. Plays a significant role in modification of the spindle pole body prior to spore formation and is required for initiating forespore membrane formation. The sequence is that of Sporulation-specific protein 13 (spo13) from Schizosaccharomyces pombe (strain 972 / ATCC 24843) (Fission yeast).